We begin with the raw amino-acid sequence, 252 residues long: tRNA (guanine-N(7)-)-methyltransferase (252 aa).

The S-adenosyl-L-methionine site is built by Glu75, Glu100, Asp127, and Asp150. Asp150 is a catalytic residue. Lys154 serves as a coordination point for substrate. An interaction with RNA region spans residues 156–161 (RHNKRR). Residues Asp186 and 223–226 (THFE) each bind substrate.

This sequence belongs to the class I-like SAM-binding methyltransferase superfamily. TrmB family.

It carries out the reaction guanosine(46) in tRNA + S-adenosyl-L-methionine = N(7)-methylguanosine(46) in tRNA + S-adenosyl-L-homocysteine. The protein operates within tRNA modification; N(7)-methylguanine-tRNA biosynthesis. Its function is as follows. Catalyzes the formation of N(7)-methylguanine at position 46 (m7G46) in tRNA. The polypeptide is tRNA (guanine-N(7)-)-methyltransferase (Xanthomonas oryzae pv. oryzae (strain MAFF 311018)).